Here is a 349-residue protein sequence, read N- to C-terminus: Nuclear distribution protein nudE homolog 1-A (349 aa).

Residues 22–189 adopt a coiled-coil conformation; sequence VAMKYKQCSE…ELAVQQKQEK (168 aa).

The protein belongs to the nudE family. As to quaternary structure, self-associates. Interacts with pafah1b1. Phosphorylated in mitosis.

The protein localises to the cytoplasm. Its subcellular location is the cytoskeleton. It localises to the microtubule organizing center. It is found in the centrosome. The protein resides in the spindle. The protein localises to the chromosome. Its subcellular location is the centromere. It localises to the kinetochore. It is found in the cleavage furrow. The protein resides in the cytoplasmic vesicle membrane. Its function is as follows. Required for centrosome duplication and formation and function of the mitotic spindle. The sequence is that of Nuclear distribution protein nudE homolog 1-A (nde1-a) from Xenopus laevis (African clawed frog).